Consider the following 63-residue polypeptide: Large ribosomal subunit protein uL29 (63 aa).

It belongs to the universal ribosomal protein uL29 family.

The sequence is that of Large ribosomal subunit protein uL29 from Yersinia pseudotuberculosis serotype O:1b (strain IP 31758).